Here is a 546-residue protein sequence, read N- to C-terminus: Interleukin-20 receptor subunit alpha (546 aa).

The signal sequence occupies residues M1–A32. Residues V33–K253 lie on the Extracellular side of the membrane. 2 consecutive Fibronectin type-III domains span residues K42–T138 and Q139–V245. 5 N-linked (GlcNAc...) asparagine glycosylation sites follow: N45, N86, N94, N185, and N203. C90 and C98 are disulfide-bonded. Residues C218 and C239 are joined by a disulfide bond. A helical membrane pass occupies residues V254 to Y274. Residues L275–S546 are Cytoplasmic-facing.

Belongs to the type II cytokine receptor family. As to quaternary structure, heterodimer with IL20RB and heterodimer with IL10RB.

The protein localises to the membrane. In terms of biological role, the IL20RA/IL20RB dimer is a receptor for IL19, IL20 and IL24. The IL20RA/IL10RB dimer is a receptor for IL26. The chain is Interleukin-20 receptor subunit alpha (Il20ra) from Mus musculus (Mouse).